We begin with the raw amino-acid sequence, 863 residues long: Leucine--tRNA ligase (863 aa).

Positions 42–53 match the 'HIGH' region motif; that stretch reads PYPSGSGLHVGH. Positions 635 to 639 match the 'KMSKS' region motif; sequence KMSKS. An ATP-binding site is contributed by K638.

The protein belongs to the class-I aminoacyl-tRNA synthetase family.

Its subcellular location is the cytoplasm. It carries out the reaction tRNA(Leu) + L-leucine + ATP = L-leucyl-tRNA(Leu) + AMP + diphosphate. The protein is Leucine--tRNA ligase of Salinibacter ruber (strain DSM 13855 / M31).